The primary structure comprises 193 residues: uncharacterized protein (193 aa).

3 disordered regions span residues 1–21, 53–96, and 114–136; these read MPKG…APPL, GAPA…PWPS, and SGPE…ASAS. Over residues 53–70 the composition is skewed to low complexity; sequence GAPAGGAPAAGGRSLPQG. Over residues 71 to 95 the composition is skewed to pro residues; the sequence is PSAPAPPPPPGLGPPSERPCPPPWP. A compositionally biased stretch (low complexity) spans 116-127; the sequence is PEAAASPLAPGP.

This is an uncharacterized protein from Bos taurus (Bovine).